A 105-amino-acid polypeptide reads, in one-letter code: Defensin-like protein (105 aa).

The N-terminal stretch at 1-25 (MARSLCFMAFAILAMMLFVAYEVQA) is a signal peptide. Intrachain disulfides connect Cys-28–Cys-72, Cys-39–Cys-59, Cys-45–Cys-66, and Cys-49–Cys-68.

The protein belongs to the DEFL family. In terms of tissue distribution, flower. Found in petals, stamen and pistils, but not in sepals. In particular, accumulation in a configuration surrounding the inner reproductive whorls.

The protein localises to the secreted. It localises to the cell wall. Its subcellular location is the vacuole. Functionally, involved in floral organogenesis. May play a protective role in flowers by protecting the reproductive organs from potential pathogen attack. The sequence is that of Defensin-like protein (FST) from Nicotiana tabacum (Common tobacco).